Consider the following 377-residue polypeptide: Chaperone protein DnaJ (377 aa).

Residues 5 to 70 form the J domain; it reads DYYEILGVSK…EKRSAYDQYG (66 aa). Residues 131–209 form a CR-type zinc finger; sequence GVVREICVPT…CRGSGRIERT (79 aa). The Zn(2+) site is built by Cys-144, Cys-147, Cys-161, Cys-164, Cys-183, Cys-186, Cys-197, and Cys-200. CXXCXGXG motif repeat units lie at residues 144–151, 161–168, 183–190, and 197–204; these read CLQCRGSG, CVTCHGHG, CPSCNGHG, and CNKCRGSG.

The protein belongs to the DnaJ family. As to quaternary structure, homodimer. Zn(2+) is required as a cofactor.

It localises to the cytoplasm. Participates actively in the response to hyperosmotic and heat shock by preventing the aggregation of stress-denatured proteins and by disaggregating proteins, also in an autonomous, DnaK-independent fashion. Unfolded proteins bind initially to DnaJ; upon interaction with the DnaJ-bound protein, DnaK hydrolyzes its bound ATP, resulting in the formation of a stable complex. GrpE releases ADP from DnaK; ATP binding to DnaK triggers the release of the substrate protein, thus completing the reaction cycle. Several rounds of ATP-dependent interactions between DnaJ, DnaK and GrpE are required for fully efficient folding. Also involved, together with DnaK and GrpE, in the DNA replication of plasmids through activation of initiation proteins. The protein is Chaperone protein DnaJ of Blochmanniella floridana.